The primary structure comprises 448 residues: Probable glycine dehydrogenase (decarboxylating) subunit 1 (448 aa).

The protein belongs to the GcvP family. N-terminal subunit subfamily. In terms of assembly, the glycine cleavage system is composed of four proteins: P, T, L and H. In this organism, the P 'protein' is a heterodimer of two subunits.

The enzyme catalyses N(6)-[(R)-lipoyl]-L-lysyl-[glycine-cleavage complex H protein] + glycine + H(+) = N(6)-[(R)-S(8)-aminomethyldihydrolipoyl]-L-lysyl-[glycine-cleavage complex H protein] + CO2. The glycine cleavage system catalyzes the degradation of glycine. The P protein binds the alpha-amino group of glycine through its pyridoxal phosphate cofactor; CO(2) is released and the remaining methylamine moiety is then transferred to the lipoamide cofactor of the H protein. The chain is Probable glycine dehydrogenase (decarboxylating) subunit 1 from Bacillus pumilus (strain SAFR-032).